A 343-amino-acid polypeptide reads, in one-letter code: Sulfate/thiosulfate import ATP-binding protein CysA (343 aa).

Positions 3-233 (ILIENISKTF…PATPFVMGFM (231 aa)) constitute an ABC transporter domain. 35-42 (GPSGSGKS) lines the ATP pocket.

Belongs to the ABC transporter superfamily. Sulfate/tungstate importer (TC 3.A.1.6) family.

Its subcellular location is the plastid. The protein localises to the chloroplast. It catalyses the reaction sulfate(out) + ATP + H2O = sulfate(in) + ADP + phosphate + H(+). The enzyme catalyses thiosulfate(out) + ATP + H2O = thiosulfate(in) + ADP + phosphate + H(+). Part of the ABC transporter complex involved in sulfate/thiosulfate import. Responsible for energy coupling to the transport system. The protein is Sulfate/thiosulfate import ATP-binding protein CysA of Nephroselmis olivacea (Green alga).